The chain runs to 184 residues: Gastrokine-1 (184 aa).

The N-terminal stretch at 1–20 (MKLTMFVVGLLGLLAAPGFA) is a signal peptide. A BRICHOS domain is found at 54–148 (NNGWDSWNSL…MCRGIPTYVA (95 aa)). An intrachain disulfide couples cysteine 81 to cysteine 140.

The protein belongs to the gastrokine family. Expressed in the stomach. Highly expressed specifically in surface cells of the antrum mucosa from where it is secreted.

Its subcellular location is the secreted. It localises to the cytoplasmic granule. It is found in the golgi apparatus. Functionally, has mitogenic activity and may be involved in maintaining the integrity of the gastric mucosal epithelium. The chain is Gastrokine-1 (Gkn1) from Mus musculus (Mouse).